The chain runs to 368 residues: Zinc finger protein 24 (368 aa).

A Glycyl lysine isopeptide (Lys-Gly) (interchain with G-Cter in SUMO2) cross-link involves residue Lys22. Lys27 participates in a covalent cross-link: Glycyl lysine isopeptide (Lys-Gly) (interchain with G-Cter in SUMO1); alternate. Residue Lys27 forms a Glycyl lysine isopeptide (Lys-Gly) (interchain with G-Cter in SUMO2); alternate linkage. The SCAN box domain maps to 52-134 (RQRFRQFGYQ…TVLEDLESEL (83 aa)). Ser132 and Ser142 each carry phosphoserine. Residues Lys147, Lys177, and Lys236 each participate in a glycyl lysine isopeptide (Lys-Gly) (interchain with G-Cter in SUMO2) cross-link. A C2H2-type 1 zinc finger spans residues 251–273 (HICDECGKHFSQGSALILHQRIH). The segment at 251–301 (HICDECGKHFSQGSALILHQRIHSGEKPYGCVECGKAFSRSSILVQHQRVH) is necessary and sufficient for nuclear localization. Ser274 bears the Phosphoserine mark. Glycyl lysine isopeptide (Lys-Gly) (interchain with G-Cter in SUMO2) cross-links involve residues Lys277 and Lys286. 3 C2H2-type zinc fingers span residues 279–301 (YGCV…QRVH), 307–329 (YKCL…QRIH), and 335–357 (YECV…XXRH). Ser292 is modified (phosphoserine). Tyr335 is modified (phosphotyrosine). Glycyl lysine isopeptide (Lys-Gly) (interchain with G-Cter in SUMO2) cross-links involve residues Lys361 and Lys367.

Belongs to the krueppel C2H2-type zinc-finger protein family. Post-translationally, sumoylated.

It is found in the nucleus. Transcription factor required for myelination of differentiated oligodendrocytes. Required for the conversion of oligodendrocytes from the premyelinating to the myelinating state. In the developing central nervous system (CNS), involved in the maintenance in the progenitor stage by promoting the cell cycle. Specifically binds to the 5'-TCAT-3' DNA sequence. Has transcription repressor activity in vitro. The chain is Zinc finger protein 24 (ZNF24) from Pan troglodytes (Chimpanzee).